We begin with the raw amino-acid sequence, 182 residues long: Protein Syd (182 aa).

Belongs to the Syd family.

The protein resides in the cell inner membrane. Functionally, interacts with the SecY protein in vivo. May bind preferentially to an uncomplexed state of SecY, thus functioning either as a chelating agent for excess SecY in the cell or as a regulatory factor that negatively controls the translocase function. This is Protein Syd from Aliivibrio salmonicida (strain LFI1238) (Vibrio salmonicida (strain LFI1238)).